We begin with the raw amino-acid sequence, 746 residues long: Histone-lysine N-methyltransferase EZH2 (746 aa).

An interaction with DNMT1, DNMT3A and DNMT3B region spans residues Met-1 to Ala-340. The residue at position 21 (Ser-21) is a Phosphoserine; by PKB/AKT1. The interval Lys-39 to Val-68 is interaction with EED. An O-linked (GlcNAc) serine glycan is attached at Ser-75. Position 76 is a phosphoserine (Ser-76). Residues Gln-180–Lys-222 are disordered. The segment covering Asn-182–Glu-195 has biased composition (acidic residues). Residues Arg-196–Lys-222 show a composition bias toward basic and acidic residues. Positions Glu-329–Pro-522 are interaction with CDYL. Thr-339 carries the post-translational modification Phosphothreonine. The tract at residues Ala-340–Pro-426 is disordered. Thr-345 bears the Phosphothreonine; by CDK1 and CDK2 mark. Residues Thr-345–Arg-357 are compositionally biased toward basic residues. Ser-363 and Ser-366 each carry phosphoserine. Phosphothreonine is present on Thr-367. Basic and acidic residues predominate over residues Glu-374–Gly-385. Position 487 is a phosphothreonine (Thr-487). The region spanning Cys-503–Ser-605 is the CXC domain. Residues Lys-612–Arg-727 enclose the SET domain. Residue Lys-634 forms a Glycyl lysine isopeptide (Lys-Gly) (interchain with G-Cter in SUMO2) linkage.

It belongs to the class V-like SAM-binding methyltransferase superfamily. Histone-lysine methyltransferase family. EZ subfamily. Component of the PRC2/EED-EZH2 complex, which includes EED, EZH2, SUZ12, RBBP4 and RBBP7 and possibly AEBP2. The minimum components required for methyltransferase activity of the PRC2/EED-EZH2 complex are EED, EZH2 and SUZ12. The PRC2 complex may also interact with DNMT1, DNMT3A, DNMT3B and PHF1 via the EZH2 subunit and with SIRT1 via the SUZ12 subunit. Interacts with HDAC1 and HDAC2. Binds ATRX via the SET domain. Interacts with PRAME. Interacts with CDYL. Interacts with CLOCK, BMAL1 and CRY1. Interacts with DNMT3L; the interaction is direct. Interacts with EZHIP; the interaction blocks EZH2 methyltransferase activity. Interacts with ZNF263; recruited to the SIX3 promoter along with other proteins involved in chromatin modification and transcriptional corepression where it contributes to transcriptional repression. Interacts with ARMC12. Interacts with ZMYND8; the interaction is dependent on the presence of chromatin. Interacts with DDX18; this interaction inhibits the PRC2 complex. In terms of processing, phosphorylated by AKT1. Phosphorylation by AKT1 reduces methyltransferase activity. Phosphorylation at Thr-345 by CDK1 and CDK2 promotes maintenance of H3K27me3 levels at EZH2-target loci, thus leading to epigenetic gene silencing. Sumoylated. Post-translationally, glycosylated: O-GlcNAcylation at Ser-75 by OGT increases stability of EZH2 and facilitates the formation of H3K27me3 by the PRC2/EED-EZH2 complex. In terms of tissue distribution, in the ovary, expressed in primordial follicles and oocytes and also in external follicle cells (at protein level). Expressed in many tissues. Overexpressed in numerous tumor types including carcinomas of the breast, colon, larynx, lymphoma and testis.

Its subcellular location is the nucleus. It catalyses the reaction L-lysyl(27)-[histone H3] + 3 S-adenosyl-L-methionine = N(6),N(6),N(6)-trimethyl-L-lysyl(27)-[histone H3] + 3 S-adenosyl-L-homocysteine + 3 H(+). Functionally, polycomb group (PcG) protein. Catalytic subunit of the PRC2/EED-EZH2 complex, which methylates 'Lys-9' (H3K9me) and 'Lys-27' (H3K27me) of histone H3, leading to transcriptional repression of the affected target gene. Able to mono-, di- and trimethylate 'Lys-27' of histone H3 to form H3K27me1, H3K27me2 and H3K27me3, respectively. Displays a preference for substrates with less methylation, loses activity when progressively more methyl groups are incorporated into H3K27, H3K27me0 &gt; H3K27me1 &gt; H3K27me2. Compared to EZH1-containing complexes, it is more abundant in embryonic stem cells and plays a major role in forming H3K27me3, which is required for embryonic stem cell identity and proper differentiation. The PRC2/EED-EZH2 complex may also serve as a recruiting platform for DNA methyltransferases, thereby linking two epigenetic repression systems. Genes repressed by the PRC2/EED-EZH2 complex include HOXC8, HOXA9, MYT1, CDKN2A and retinoic acid target genes. EZH2 can also methylate non-histone proteins such as the transcription factor GATA4 and the nuclear receptor RORA. Regulates the circadian clock via histone methylation at the promoter of the circadian genes. Essential for the CRY1/2-mediated repression of the transcriptional activation of PER1/2 by the CLOCK-BMAL1 heterodimer; involved in the di and trimethylation of 'Lys-27' of histone H3 on PER1/2 promoters which is necessary for the CRY1/2 proteins to inhibit transcription. In Homo sapiens (Human), this protein is Histone-lysine N-methyltransferase EZH2.